An 881-amino-acid chain; its full sequence is EEF1AKMT4-ECE2 readthrough transcript protein (881 aa).

The tract at residues 1–160 (MASPRTPVSP…VHTVDQVLSE (160 aa)) is methyltransferase-like region. The Cytoplasmic segment spans residues 1–178 (MASPRTPVSP…QLFGSHTQLE (178 aa)). S-adenosyl-L-methionine is bound by residues W26 and Y30. The residue at position 39 (Y39) is a Phosphotyrosine. S-adenosyl-L-methionine-binding positions include W41, G66, 88–89 (DY), 113–114 (DV), and K130. A Phosphoserine modification is found at H174. The helical; Signal-anchor for type II membrane protein transmembrane segment at 179-199 (LVLAGLILVLAALLLGCLVAL) threads the bilayer. At 200-881 (WVHRDPAHST…MNPGQLCEVW (682 aa)) the chain is on the lumenal side. Residues 209–881 (TCVTEACIRV…MNPGQLCEVW (673 aa)) form the Peptidase M13 domain. 5 disulfide bridges follow: C210–C215, C233–C866, C241–C826, C297–C546, and C755–C878. N277, N281, N322, N382, N427, N494, and N650 each carry an N-linked (GlcNAc...) asparagine glycan. H718 is a Zn(2+) binding site. E719 is a catalytic residue. Residue H722 coordinates Zn(2+). N743 and N751 each carry an N-linked (GlcNAc...) asparagine glycan. Residue E778 coordinates Zn(2+). Catalysis depends on D782, which acts as the Proton donor.

The protein in the N-terminal section; belongs to the methyltransferase superfamily. This sequence in the C-terminal section; belongs to the peptidase M13 family. Zn(2+) serves as cofactor. As to expression, expressed at high levels in central nervous system. Expressed in adrenal glands, ovary and uterus, and at low levels in heart.

The protein resides in the golgi apparatus membrane. Its subcellular location is the cytoplasmic vesicle. It is found in the secretory vesicle membrane. It carries out the reaction Hydrolysis of the 21-Trp-|-Val-22 bond in big endothelin to form endothelin 1.. Inhibited by phosphoramidon. Converts big endothelin-1 to endothelin-1. May also have methyltransferase activity. May play a role in amyloid-beta processing. This chain is EEF1AKMT4-ECE2 readthrough transcript protein, found in Mus musculus (Mouse).